The following is a 627-amino-acid chain: tRNA uridine 5-carboxymethylaminomethyl modification enzyme MnmG (627 aa).

14-19 (GAGHAG) is a binding site for FAD. NAD(+) is bound at residue 275–289 (GPRYCPSIEDKVVKF).

It belongs to the MnmG family. As to quaternary structure, homodimer. Heterotetramer of two MnmE and two MnmG subunits. FAD is required as a cofactor.

Its subcellular location is the cytoplasm. NAD-binding protein involved in the addition of a carboxymethylaminomethyl (cmnm) group at the wobble position (U34) of certain tRNAs, forming tRNA-cmnm(5)s(2)U34. This is tRNA uridine 5-carboxymethylaminomethyl modification enzyme MnmG from Lachnoclostridium phytofermentans (strain ATCC 700394 / DSM 18823 / ISDg) (Clostridium phytofermentans).